The primary structure comprises 604 residues: Inositol-3-phosphate synthase 1 (604 aa).

NAD(+)-binding residues include glycine 88, glycine 89, asparagine 90, asparagine 91, aspartate 163, serine 198, valine 199, glutamine 210, arginine 213, serine 251, glycine 252, asparagine 253, threonine 254, serine 303, aspartate 327, leucine 328, threonine 330, asparagine 361, asparagine 362, aspartate 363, lysine 376, glycine 456, aspartate 457, aspartate 485, and serine 486.

Belongs to the myo-inositol 1-phosphate synthase family. The cofactor is NAD(+).

The enzyme catalyses D-glucose 6-phosphate = 1D-myo-inositol 3-phosphate. Its pathway is polyol metabolism; myo-inositol biosynthesis; myo-inositol from D-glucose 6-phosphate: step 1/2. In terms of biological role, key enzyme in myo-inositol biosynthesis pathway that catalyzes the conversion of glucose 6-phosphate to 1-myo-inositol 1-phosphate in a NAD-dependent manner. Rate-limiting enzyme in the synthesis of all inositol-containing compounds. De novo-synthesized myo-inositol is essential for incorporation into GPI (glycosylphosphatidylinositol) glycolipids during intra-erythrocytic development. The polypeptide is Inositol-3-phosphate synthase 1 (Plasmodium falciparum (isolate 3D7)).